Reading from the N-terminus, the 322-residue chain is uncharacterized protein (322 aa).

The segment at 269–289 (QDEEEEPRDERRPRRRLGKAQ) is disordered.

This is an uncharacterized protein from Sinorhizobium fredii (strain NBRC 101917 / NGR234).